Here is a 192-residue protein sequence, read N- to C-terminus: Orotate phosphoribosyltransferase (192 aa).

5-phospho-alpha-D-ribose 1-diphosphate contacts are provided by residues Arg84, Lys88, and 110–118 (DDVLTTGNS). 2 residues coordinate orotate: Thr114 and Arg142.

It belongs to the purine/pyrimidine phosphoribosyltransferase family. PyrE subfamily. In terms of assembly, homodimer. The cofactor is Mg(2+).

The enzyme catalyses orotidine 5'-phosphate + diphosphate = orotate + 5-phospho-alpha-D-ribose 1-diphosphate. The protein operates within pyrimidine metabolism; UMP biosynthesis via de novo pathway; UMP from orotate: step 1/2. Functionally, catalyzes the transfer of a ribosyl phosphate group from 5-phosphoribose 1-diphosphate to orotate, leading to the formation of orotidine monophosphate (OMP). This Pyrobaculum calidifontis (strain DSM 21063 / JCM 11548 / VA1) protein is Orotate phosphoribosyltransferase.